Consider the following 99-residue polypeptide: Protein S100-A11 (99 aa).

Met-1 bears the N-acetylmethionine mark. A Phosphothreonine modification is found at Thr-8. EF-hand domains lie at 10–47 (RCIE…ELAA) and 53–88 (KDPG…LAIA). Residues Asn-29, Lys-31, Glu-36, Asp-66, Asp-68, Asp-70, Gln-72, and Glu-77 each coordinate Ca(2+).

This sequence belongs to the S-100 family. In terms of assembly, homodimer; disulfide-linked. Phosphorylation at Thr-8 significantly suppresses homodimerization and promotes association with NCL/nucleolin which induces nuclear translocation.

It is found in the cytoplasm. The protein localises to the nucleus. In terms of biological role, facilitates the differentiation and the cornification of keratinocytes. The polypeptide is Protein S100-A11 (S100A11) (Sus scrofa (Pig)).